The primary structure comprises 196 residues: Ribosomal RNA large subunit methyltransferase E (196 aa).

5 residues coordinate S-adenosyl-L-methionine: glycine 50, tryptophan 52, aspartate 70, aspartate 87, and aspartate 112. Catalysis depends on lysine 152, which acts as the Proton acceptor.

This sequence belongs to the class I-like SAM-binding methyltransferase superfamily. RNA methyltransferase RlmE family.

Its subcellular location is the cytoplasm. It catalyses the reaction uridine(2552) in 23S rRNA + S-adenosyl-L-methionine = 2'-O-methyluridine(2552) in 23S rRNA + S-adenosyl-L-homocysteine + H(+). In terms of biological role, specifically methylates the uridine in position 2552 of 23S rRNA at the 2'-O position of the ribose in the fully assembled 50S ribosomal subunit. The protein is Ribosomal RNA large subunit methyltransferase E of Bdellovibrio bacteriovorus (strain ATCC 15356 / DSM 50701 / NCIMB 9529 / HD100).